We begin with the raw amino-acid sequence, 567 residues long: ATP-dependent RNA helicase HAS1 (567 aa).

The segment at M1–G109 is disordered. A compositionally biased stretch (acidic residues) spans E30–D40. The stretch at E35–Y88 forms a coiled coil. The short motif at D103 to A131 is the Q motif element. One can recognise a Helicase ATP-binding domain in the interval I134–Y310. A147–T154 contacts ATP. Positions D257–D260 match the DEAD box motif. The Helicase C-terminal domain occupies G324–V484.

The protein belongs to the DEAD box helicase family. DDX18/HAS1 subfamily. As to quaternary structure, associates in the nucleolus with the 60S and pre-60S ribosomal subunits.

Its subcellular location is the nucleus. It is found in the nucleolus. It carries out the reaction ATP + H2O = ADP + phosphate + H(+). In terms of biological role, ATP-dependent RNA helicase involved in 40S ribosomal subunit biogenesis. Required for the processing and cleavage of 35S pre-rRNA at sites A0, A1, and A2, leading to mature 18S rRNA. This Scheffersomyces stipitis (strain ATCC 58785 / CBS 6054 / NBRC 10063 / NRRL Y-11545) (Yeast) protein is ATP-dependent RNA helicase HAS1 (HAS1).